The chain runs to 477 residues: Aspartyl/glutamyl-tRNA(Asn/Gln) amidotransferase subunit B (477 aa).

This sequence belongs to the GatB/GatE family. GatB subfamily. Heterotrimer of A, B and C subunits.

The catalysed reaction is L-glutamyl-tRNA(Gln) + L-glutamine + ATP + H2O = L-glutaminyl-tRNA(Gln) + L-glutamate + ADP + phosphate + H(+). It carries out the reaction L-aspartyl-tRNA(Asn) + L-glutamine + ATP + H2O = L-asparaginyl-tRNA(Asn) + L-glutamate + ADP + phosphate + 2 H(+). Its function is as follows. Allows the formation of correctly charged Asn-tRNA(Asn) or Gln-tRNA(Gln) through the transamidation of misacylated Asp-tRNA(Asn) or Glu-tRNA(Gln) in organisms which lack either or both of asparaginyl-tRNA or glutaminyl-tRNA synthetases. The reaction takes place in the presence of glutamine and ATP through an activated phospho-Asp-tRNA(Asn) or phospho-Glu-tRNA(Gln). The polypeptide is Aspartyl/glutamyl-tRNA(Asn/Gln) amidotransferase subunit B (Thioalkalivibrio sulfidiphilus (strain HL-EbGR7)).